The chain runs to 697 residues: T-related protein (697 aa).

The tract at residues 1–60 (MTTSHILSAVDPTTGLSGNVSGGGGGGGAGGGAGSGSPQHVTHNGHGHGHGLGGVAAVSG) is disordered. Gly residues-rich tracts occupy residues 20 to 35 (VSGG…GAGS) and 50 to 60 (HGLGGVAAVSG). A DNA-binding region (T-box) is located at residues 96-264 (LWLRFQNLTN…YNPFAKAFLD (169 aa)). Low complexity predominate over residues 316 to 330 (SVSSAESVGPSSGGS). Disordered stretches follow at residues 316 to 407 (SVSS…GGIG) and 462 to 488 (VCSG…TSSP). Over residues 337 to 351 (SLSSRSVAPTRTTPY) the composition is skewed to polar residues. Composition is skewed to low complexity over residues 352–373 (SRPR…SSTS), 381–401 (QTPT…VSSS), and 469–488 (SSHN…TSSP).

Its subcellular location is the nucleus. Its function is as follows. Required for the specification of the hindgut and anal pads. The polypeptide is T-related protein (byn) (Drosophila melanogaster (Fruit fly)).